The following is a 352-amino-acid chain: Large ribosomal subunit protein uL5m (352 aa).

A disordered region spans residues 28 to 109 (STQTGAGAAA…HPIQSPPSSD (82 aa)). Residues 63 to 80 (EEDKKEFRPWKRAADRKA) show a composition bias toward basic and acidic residues.

The protein belongs to the universal ribosomal protein uL5 family. Component of the mitochondrial large ribosomal subunit (mt-LSU). Mature N.crassa 74S mitochondrial ribosomes consist of a small (37S) and a large (54S) subunit. The 37S small subunit contains a 16S ribosomal RNA (16S mt-rRNA) and 32 different proteins. The 54S large subunit contains a 23S rRNA (23S mt-rRNA) and 42 different proteins. Unlike bacterial L5, uL5m does not bind zinc.

Its subcellular location is the mitochondrion. Its function is as follows. Component of the mitochondrial ribosome (mitoribosome), a dedicated translation machinery responsible for the synthesis of mitochondrial genome-encoded proteins, including at least some of the essential transmembrane subunits of the mitochondrial respiratory chain. The mitoribosomes are attached to the mitochondrial inner membrane and translation products are cotranslationally integrated into the membrane. The sequence is that of Large ribosomal subunit protein uL5m (mrpl7) from Neurospora crassa (strain ATCC 24698 / 74-OR23-1A / CBS 708.71 / DSM 1257 / FGSC 987).